Reading from the N-terminus, the 185-residue chain is Large ribosomal subunit protein uL5 (185 aa).

It belongs to the universal ribosomal protein uL5 family. In terms of assembly, part of the 50S ribosomal subunit; part of the 5S rRNA/L5/L18/L25 subcomplex. Contacts the 5S rRNA and the P site tRNA. Forms a bridge to the 30S subunit in the 70S ribosome.

Functionally, this is one of the proteins that bind and probably mediate the attachment of the 5S RNA into the large ribosomal subunit, where it forms part of the central protuberance. In the 70S ribosome it contacts protein S13 of the 30S subunit (bridge B1b), connecting the 2 subunits; this bridge is implicated in subunit movement. Contacts the P site tRNA; the 5S rRNA and some of its associated proteins might help stabilize positioning of ribosome-bound tRNAs. The sequence is that of Large ribosomal subunit protein uL5 from Caulobacter vibrioides (strain NA1000 / CB15N) (Caulobacter crescentus).